A 1141-amino-acid chain; its full sequence is PR domain zinc finger protein 15 (1141 aa).

The SET domain occupies 49–159 (PNLEIRRLED…PGTELRVWYA (111 aa)). Residues 197–219 (WACKVCSATFLELQLLNEHLLGH) form a C2H2-type 1 zinc finger. The segment at 224 to 283 (KSLPPGSQSEAAAPEKEQDTPRGEPPAVPESENVATKEQKKKPRRGRKPKVSKAEQPLVI) is disordered. Residues 236 to 245 (APEKEQDTPR) show a composition bias toward basic and acidic residues. Residues 262-274 (QKKKPRRGRKPKV) show a composition bias toward basic residues. 4 C2H2-type zinc fingers span residues 372–394 (YQCNICSKIFQNSSNLSRHVRSH), 399–422 (FKCEECAKLFSRKESLKQHVSYKH), 460–482 (FQCEMCFRFFSTNSNLSKHKKKH), and 487–509 (FACEVCSKMFYRKDVMLDHQRRH). Lys-517 is covalently cross-linked (Glycyl lysine isopeptide (Lys-Gly) (interchain with G-Cter in SUMO2)). 2 C2H2-type zinc fingers span residues 536–558 (SGCPVCGKVFSCRSNMNKHLLTH) and 563–585 (YTCEICGRKFFRVDVLRDHIHVH). Residues 604-623 (IGISSEENDDNSDESADSEP) are disordered. Residues 609 to 620 (EENDDNSDESAD) show a composition bias toward acidic residues. C2H2-type zinc fingers lie at residues 626-649 (YSCKRCQLTFGRGKEYLKHIMEVH), 654-676 (YGCSICNRRFALKATYHAHMVIH), 690-712 (HPCEICGRIFNSIGNLERHKLIH), 718-740 (HACEQCGKSFARKDMLKEHMRVH), 746-768 (YLCAECGKGMKTKHALRHHMKLH), 774-796 (YECKECHRRFAQKVNMLKHCKRH), 802-824 (FMCELCGKTFSERNTMETHKLIH), 830-853 (WTCSVCDKKYVTEYMLQKHVQLTH), and 859-882 (QSCQLCGTKVSTRASMSRHMRRKH). Disordered stretches follow at residues 922-973 (AEGK…DETN) and 1108-1141 (QTDVLPPSQPQAPPQQAAQPQVQAEQQQQQMYSY). A compositionally biased stretch (basic residues) spans 927–938 (GKAAKRSHKRKQ). Over residues 1121 to 1141 (PQQAAQPQVQAEQQQQQMYSY) the composition is skewed to low complexity.

Belongs to the class V-like SAM-binding methyltransferase superfamily. In terms of tissue distribution, detected in all tissues examined.

The protein localises to the nucleus. In terms of biological role, sequence-specific DNA-binding transcriptional regulator. Plays a role as a molecular node in a transcriptional network regulating embryonic development and cell fate decision. Stimulates the expression of upstream key transcriptional activators and repressors of the Wnt/beta-catenin and MAPK/ERK pathways, respectively, that are essential for naive pluripotency and self-renewal maintenance of embryonic stem cells (ESCs). Specifically promotes SPRY1 and RSPO1 transcription activation through recognition and direct binding of a specific DNA sequence in their promoter regions. Involved in early embryo development. Also plays a role in induced pluripotent stem cells (iPSCs) reprogramming. The chain is PR domain zinc finger protein 15 from Homo sapiens (Human).